Here is a 250-residue protein sequence, read N- to C-terminus: tRNA (guanine-N(1)-)-methyltransferase (250 aa).

Residues glycine 116 and 136 to 141 (IGDYVL) contribute to the S-adenosyl-L-methionine site.

It belongs to the RNA methyltransferase TrmD family. As to quaternary structure, homodimer.

The protein localises to the cytoplasm. The enzyme catalyses guanosine(37) in tRNA + S-adenosyl-L-methionine = N(1)-methylguanosine(37) in tRNA + S-adenosyl-L-homocysteine + H(+). In terms of biological role, specifically methylates guanosine-37 in various tRNAs. The chain is tRNA (guanine-N(1)-)-methyltransferase from Pseudomonas putida (strain ATCC 47054 / DSM 6125 / CFBP 8728 / NCIMB 11950 / KT2440).